Consider the following 128-residue polypeptide: Large ribosomal subunit protein bL17 (128 aa).

It belongs to the bacterial ribosomal protein bL17 family. As to quaternary structure, part of the 50S ribosomal subunit. Contacts protein L32.

The chain is Large ribosomal subunit protein bL17 from Edwardsiella ictaluri (strain 93-146).